Reading from the N-terminus, the 316-residue chain is Olfactory receptor 4N4C (316 aa).

The Cytoplasmic portion of the chain corresponds to 1–26 (MKIANNTVVTEFILLGLTQSQDIQLL). Residues 27–47 (VFVLILIFYLIILPGNFLIIF) form a helical membrane-spanning segment. The Extracellular segment spans residues 48–56 (TIRSDPGLT). Residues 57-77 (APLYLFLGNLAFLDASYSFIV) traverse the membrane as a helical segment. Topologically, residues 78 to 99 (APRMLVDFLSEKKVISYRGCIT) are cytoplasmic. C97 and C179 form a disulfide bridge. A helical membrane pass occupies residues 100–120 (QLFFLHFLGGGEGLLLVVMAF). The Extracellular portion of the chain corresponds to 121 to 143 (DRYIAICRPLHCSTVMNPRACYA). A helical transmembrane segment spans residues 144–164 (MMLALWLGGFVHSIIQVVLIL). The Cytoplasmic segment spans residues 165–204 (RLPFCGPNQLDNFFCDVRQVIKLACTDMFVVELLMVFNSG). Residues 205–225 (LMTLLCFLGLLASYAVILCHV) traverse the membrane as a helical segment. At 226-243 (RRAASEGKNKAMSTCTTR) the chain is on the extracellular side. Residues 244-264 (VIIILLMFGPAIFIYICPFRA) traverse the membrane as a helical segment. Topologically, residues 265 to 268 (LPAD) are cytoplasmic. Residues 269–289 (KMVSLFHTVIFPLMNPMIYTL) traverse the membrane as a helical segment. Topologically, residues 290–316 (RNQEVKTSMKRLLSRHVVCQVDFIIRN) are extracellular.

The protein belongs to the G-protein coupled receptor 1 family.

The protein localises to the membrane. Odorant receptor. The polypeptide is Olfactory receptor 4N4C (Homo sapiens (Human)).